The sequence spans 116 residues: Non-specific lipid-transfer protein 1 (116 aa).

An N-terminal signal peptide occupies residues 1–25; sequence MARAQLVLVALVAALLLAAPHAAVA. Intrachain disulfides connect C28–C75, C38–C52, C53–C98, and C73–C112.

The protein belongs to the plant LTP family. Aleurone (external part) of the seeds.

Its function is as follows. Plant non-specific lipid-transfer proteins transfer phospholipids as well as galactolipids across membranes. May play a role in wax or cutin deposition in the cell walls of expanding epidermal cells and certain secretory tissues. The protein is Non-specific lipid-transfer protein 1 (LTP) of Oryza sativa subsp. indica (Rice).